Here is a 387-residue protein sequence, read N- to C-terminus: MLPDGVADVLFEDAHKQEVLRHQLTQQLITHGYQLVSPPMIEFTESLLSGASEDLKRQTFKIIDQLTGRLMGIRADITPQILRIDAHHGGDGIARYCYAGDVIHTLPSGLFGSRTPLQLGAEIFGCESIAADIELIDVLFSMINSLDMSAVLHVDLGHVTIFKRLAELAALSASDTEQLMQLYANKNLPELKQVCQVLPMGSDFYTLARFGHDIANLLGRLSENAQQDTKIVTAIDELQRLKAHLQVQWQCAVSIDVTELSGYHYHTGIVFNGYINSETQPLVRGGRFDGMKSNQLATNQPRQATGFSMDVSRLLAHTQLDAPFIVLIDYDAFNNLDSAQRQLLLQQVASLRQQGYRVTMPLTAEDMPVGLTHRLSLADNQWRLHAV.

This sequence belongs to the class-II aminoacyl-tRNA synthetase family. HisZ subfamily. As to quaternary structure, heteromultimer composed of HisG and HisZ subunits.

It is found in the cytoplasm. It functions in the pathway amino-acid biosynthesis; L-histidine biosynthesis; L-histidine from 5-phospho-alpha-D-ribose 1-diphosphate: step 1/9. Its function is as follows. Required for the first step of histidine biosynthesis. May allow the feedback regulation of ATP phosphoribosyltransferase activity by histidine. The sequence is that of ATP phosphoribosyltransferase regulatory subunit from Psychrobacter arcticus (strain DSM 17307 / VKM B-2377 / 273-4).